A 1072-amino-acid chain; its full sequence is DNA-directed RNA polymerase subunit beta (1072 aa).

This sequence belongs to the RNA polymerase beta chain family. In terms of assembly, in plastids the minimal PEP RNA polymerase catalytic core is composed of four subunits: alpha, beta, beta', and beta''. When a (nuclear-encoded) sigma factor is associated with the core the holoenzyme is formed, which can initiate transcription.

The protein resides in the plastid. It is found in the chloroplast. It catalyses the reaction RNA(n) + a ribonucleoside 5'-triphosphate = RNA(n+1) + diphosphate. In terms of biological role, DNA-dependent RNA polymerase catalyzes the transcription of DNA into RNA using the four ribonucleoside triphosphates as substrates. The chain is DNA-directed RNA polymerase subunit beta from Cycas taitungensis (Prince sago).